A 259-amino-acid chain; its full sequence is Small ribosomal subunit protein eS1 (259 aa).

Belongs to the eukaryotic ribosomal protein eS1 family. In terms of assembly, component of the small ribosomal subunit. Mature ribosomes consist of a small (40S) and a large (60S) subunit. The 40S subunit contains about 33 different proteins and 1 molecule of RNA (18S). The 60S subunit contains about 49 different proteins and 3 molecules of RNA (25S, 5.8S and 5S).

The protein resides in the cytoplasm. The protein is Small ribosomal subunit protein eS1 of Monosiga brevicollis (Choanoflagellate).